The sequence spans 265 residues: Phosphatidylglycerol--prolipoprotein diacylglyceryl transferase (265 aa).

The next 7 helical transmembrane spans lie at 17 to 37 (VAVRWYGLMYLLAFVLFVVLG), 57 to 77 (LLLYGVLGVIIGGRLGEVLFY), 89 to 109 (ILAVWKGGMSFHGGFLGVLVA), 127 to 147 (FIAPLVPTGLAAGRIGNFING), 176 to 196 (QLYQAAGEGLLLFAIVWVFAA), 201 to 218 (LRAVSAVFLIGYGSLRFV), and 233 to 253 (LVPGLSTAQWLCVPMVVVGLA). Arginine 140 contacts a 1,2-diacyl-sn-glycero-3-phospho-(1'-sn-glycerol).

It belongs to the Lgt family.

The protein resides in the cell inner membrane. It carries out the reaction L-cysteinyl-[prolipoprotein] + a 1,2-diacyl-sn-glycero-3-phospho-(1'-sn-glycerol) = an S-1,2-diacyl-sn-glyceryl-L-cysteinyl-[prolipoprotein] + sn-glycerol 1-phosphate + H(+). It participates in protein modification; lipoprotein biosynthesis (diacylglyceryl transfer). In terms of biological role, catalyzes the transfer of the diacylglyceryl group from phosphatidylglycerol to the sulfhydryl group of the N-terminal cysteine of a prolipoprotein, the first step in the formation of mature lipoproteins. The sequence is that of Phosphatidylglycerol--prolipoprotein diacylglyceryl transferase from Azoarcus sp. (strain BH72).